A 268-amino-acid chain; its full sequence is LOB domain-containing protein 22 (268 aa).

Residues 1 to 31 are disordered; the sequence is MPSGKPSSVFPLHPKPTPLKPSSSTSSSNNN. Low complexity predominate over residues 22–31; sequence SSSTSSSNNN. Positions 35 to 136 constitute an LOB domain; sequence QACAACKYQR…NELEIVLQQL (102 aa).

Belongs to the LOB domain-containing protein family.

This is LOB domain-containing protein 22 (LBD22) from Arabidopsis thaliana (Mouse-ear cress).